A 435-amino-acid chain; its full sequence is E3 ubiquitin-protein ligase itt1 (435 aa).

The 120-residue stretch at D16–A135 folds into the RWD domain. A TRIAD supradomain region spans residues R170–L420. Zn(2+)-binding residues include C174, C177, C192, H194, C197, C200, C219, C224, C266, C271, C286, C289, C294, C297, H302, C308, C368, and C371. An RING-type 1 zinc finger spans residues C174–C224. The IBR-type zinc-finger motif lies at T245–C308. The segment at C368–C396 adopts an RING-type 2; atypical zinc-finger fold. Residue C381 is part of the active site. The Zn(2+) site is built by C386, C388, C393, C396, H408, and C416.

Belongs to the RBR family. RNF14 subfamily.

It localises to the cytoplasm. Its subcellular location is the nucleus. It catalyses the reaction [E2 ubiquitin-conjugating enzyme]-S-ubiquitinyl-L-cysteine + [acceptor protein]-L-lysine = [E2 ubiquitin-conjugating enzyme]-L-cysteine + [acceptor protein]-N(6)-ubiquitinyl-L-lysine.. It functions in the pathway protein modification; protein ubiquitination. E3 ubiquitin-protein ligase involved in the rescue of stalled ribosomes by promoting ubiquitination and degradation of proteins on stalled ribosomes. Specifically required to resolve RNA-protein cross-links caused by reactive aldehydes, which trigger translation stress by stalling ribosomes: acts by catalying 'Lys-6'-linked ubiquitination of RNA-protein cross-links, leading to their degradation. The protein is E3 ubiquitin-protein ligase itt1 (itt1) of Schizosaccharomyces pombe (strain 972 / ATCC 24843) (Fission yeast).